Here is a 93-residue protein sequence, read N- to C-terminus: Small ribosomal subunit protein uS19 (93 aa).

The disordered stretch occupies residues 73 to 93 (EFSPTRTFRGHVKDDRKSKRR). Residues 83–93 (HVKDDRKSKRR) show a composition bias toward basic and acidic residues.

This sequence belongs to the universal ribosomal protein uS19 family.

Its function is as follows. Protein S19 forms a complex with S13 that binds strongly to the 16S ribosomal RNA. This Streptomyces coelicolor (strain ATCC BAA-471 / A3(2) / M145) protein is Small ribosomal subunit protein uS19.